Here is a 154-residue protein sequence, read N- to C-terminus: Ribosome maturation factor RimP (154 aa).

Belongs to the RimP family.

Its subcellular location is the cytoplasm. Its function is as follows. Required for maturation of 30S ribosomal subunits. The polypeptide is Ribosome maturation factor RimP (Finegoldia magna (strain ATCC 29328 / DSM 20472 / WAL 2508) (Peptostreptococcus magnus)).